The following is a 306-amino-acid chain: Curved DNA-binding protein (306 aa).

The J domain occupies D5–W69.

The protein localises to the cytoplasm. It localises to the nucleoid. Functionally, DNA-binding protein that preferentially recognizes a curved DNA sequence. It is probably a functional analog of DnaJ; displays overlapping activities with DnaJ, but functions under different conditions, probably acting as a molecular chaperone in an adaptive response to environmental stresses other than heat shock. Lacks autonomous chaperone activity; binds native substrates and targets them for recognition by DnaK. Its activity is inhibited by the binding of CbpM. This is Curved DNA-binding protein from Escherichia fergusonii (strain ATCC 35469 / DSM 13698 / CCUG 18766 / IAM 14443 / JCM 21226 / LMG 7866 / NBRC 102419 / NCTC 12128 / CDC 0568-73).